Consider the following 926-residue polypeptide: Ubiquitin carboxyl-terminal hydrolase 4 (926 aa).

Residues 205 to 328 enclose the Rhodanese domain; the sequence is SQMEILLIDI…WLKSNYGSQV (124 aa). The residue at position 443 (S443) is a Phosphoserine. The region spanning 562–923 is the USP domain; the sequence is VGLENLGNSC…NAYVLFYHRV (362 aa). C571 functions as the Nucleophile in the catalytic mechanism. Catalysis depends on H880, which acts as the Proton acceptor.

The protein belongs to the peptidase C19 family. In terms of assembly, interacts with BRO1, RFU1 and VPS32. Associates with the 26S proteasome.

It localises to the cytoplasm. Its subcellular location is the late endosome membrane. The enzyme catalyses Thiol-dependent hydrolysis of ester, thioester, amide, peptide and isopeptide bonds formed by the C-terminal Gly of ubiquitin (a 76-residue protein attached to proteins as an intracellular targeting signal).. With respect to regulation, RFU1 is an inhibitor of deubiquitination activity. Ubiquitin thioesterase that acts at the late endosome/prevacuolar compartment to recover ubiquitin from ubiquitinated membrane proteins en route to the vacuole. Also removes ubiquitin from soluble proteins targeted to proteasomes. Is essential to maintain a normal level of free ubiquitin. Involved in the ammonium-induced down-regulation of the GAP1 permease and the UME3 destruction in response to oxidative stress. Has a role in the RAD9 checkpoint response to TOP1 poisons. Required for promoting coordination of DNA replication and avoids DNA overreplication. This is Ubiquitin carboxyl-terminal hydrolase 4 (DOA4) from Saccharomyces cerevisiae (strain YJM789) (Baker's yeast).